The sequence spans 96 residues: Protein Vpr (96 aa).

The homooligomerization stretch occupies residues 1–42 (MEQAPEDQGPQREPYNEWTLELLEELKREAVRHFPRPWLHGL). Residues Ser79, Ser94, and Ser96 each carry the phosphoserine; by host modification.

This sequence belongs to the HIV-1 VPR protein family. In terms of assembly, homooligomer, may form homodimer. Interacts with p6-gag region of the Pr55 Gag precursor protein through a (Leu-X-X)4 motif near the C-terminus of the P6gag protein. Interacts with host UNG. May interact with host RAD23A/HHR23A. Interacts with host VPRBP/DCAF1, leading to hijack the CUL4A-RBX1-DDB1-DCAF1/VPRBP complex, mediating ubiquitination of host proteins such as TERT and ZGPAT and arrest of the cell cycle in G2 phase. Phosphorylated on several residues by host. These phosphorylations regulate VPR activity for the nuclear import of the HIV-1 pre-integration complex.

The protein localises to the virion. Its subcellular location is the host nucleus. The protein resides in the host extracellular space. Its function is as follows. During virus replication, may deplete host UNG protein, and incude G2-M cell cycle arrest. Acts by targeting specific host proteins for degradation by the 26S proteasome, through association with the cellular CUL4A-DDB1 E3 ligase complex by direct interaction with host VPRPB/DCAF-1. Cell cycle arrest reportedly occurs within hours of infection and is not blocked by antiviral agents, suggesting that it is initiated by the VPR carried into the virion. Additionally, VPR induces apoptosis in a cell cycle dependent manner suggesting that these two effects are mechanistically linked. Detected in the serum and cerebrospinal fluid of AIDS patient, VPR may also induce cell death to bystander cells. Functionally, during virus entry, plays a role in the transport of the viral pre-integration (PIC) complex to the host nucleus. This function is crucial for viral infection of non-dividing macrophages. May act directly at the nuclear pore complex, by binding nucleoporins phenylalanine-glycine (FG)-repeat regions. This chain is Protein Vpr, found in Human immunodeficiency virus type 1 group M subtype C (isolate 92BR025) (HIV-1).